A 74-amino-acid chain; its full sequence is MRTTIDLDDDILRALKRRQREERKTLGQLASELLAQALAAEPPPNVDIRWSTADLRPRVDLDDKDAVWAILDRG.

Functionally, possibly the antitoxin component of a type II toxin-antitoxin (TA) system. Its cognate toxin is VapC48 (Potential). This Mycobacterium tuberculosis (strain CDC 1551 / Oshkosh) protein is Putative antitoxin VapB48 (vapB48).